The chain runs to 854 residues: MDKQQSPPPRRRRRPMLSCWECRRRKIKCDRNDPCAHCIRHETQCVFTAHTGTVATDSDVSRTRPGPKSASRPGVSIASGSNSAVATRPSSDAGRGGSAIPTAPPPRGPSSLPSIAGPNHPFNILNPSQDVSAPSTQVLQPSSRGPSLSTNTSPSASSAVIHTLLERIKTLEDSYSSLSSRHGDSIESRVSSIGEPRDLRPAWEDTVARHANAARRPAGLAGNWQDIVRRKSTKLGRSHRMGDAPDFAAIIECYSVMMGLTSKDDFSHIPEIKDLLAEGGGLLVESKQIAQRLKLGQPSKPPHTLSVVPPSPKLGQYLVRPTRERADVMAKLYFESFESAYRILHAPTFWANYEKYWQAPEAASNAVYLQILLVVAIGSSIYDHGDCNAVLDNIEMSRPCIFAAENWLADPFEKDRLEIAGLQVYCLCNMARQIYNVGGDLIWTSMGPLLYRALQVGLHREPGRLPGVSMFQAEIRRRLWATILDMVVQASLDALMPPMMSLDEFDVEPPANINDEEMDEDTTIIVPHPRTTFTSTSAQLALLETLPLRFGIVQYLFGMQSEQSYPSVLSLSSRLASALSMCNSLGNLGPQSQDQSHDNNMGTTNTTMAFRSITPFQRNLLDYLVRRFMTPLHMFFATQSHSNPVFHYSLTVSLDAALALVSPATPTTTTISTPAHNNEETNHFDRLLSTAGGLFREGFRTALTTISLALLVHAKTQQVSGTLHRAPQHRESLKAAVRDLVALAERRVRNGDTNIRAYMFLNMVLAQVEAMEAGARAGDGAFEMALVSGAVKSLRFCRDVIKTRAETRAPVDWEEMDFDADGMASFLPGDMDADAFGLDWDWESLLTTMDMAEG.

The zn(2)-C6 fungal-type DNA-binding region spans 19–45 (CWECRRRKIKCDRNDPCAHCIRHETQC). A disordered region spans residues 56 to 156 (TDSDVSRTRP…SLSTNTSPSA (101 aa)). 2 stretches are compositionally biased toward polar residues: residues 78 to 90 (ASGS…TRPS) and 125 to 145 (LNPS…SSRG). Over residues 146 to 156 (PSLSTNTSPSA) the composition is skewed to low complexity.

The protein resides in the nucleus. In terms of biological role, transcription factor; part of the gene cluster that mediates the biosynthesis of xenovulene A, an unusual meroterpenoid that has potent inhibitory effects on the human gamma-aminobutyrate A (GABAA) benzodiazepine receptor. This is Transcription factor asR3 from Sarocladium schorii (Acremonium strictum (strain IMI 501407)).